Here is a 194-residue protein sequence, read N- to C-terminus: Thymidine kinase (194 aa).

ATP is bound by residues 15-22 and 88-91; these read GSMFSGKS and DEVQ. Glu-89 serves as the catalytic Proton acceptor. Residues Cys-145, Cys-148, Cys-183, and His-186 each contribute to the Zn(2+) site.

Belongs to the thymidine kinase family. In terms of assembly, homotetramer.

It localises to the cytoplasm. The enzyme catalyses thymidine + ATP = dTMP + ADP + H(+). This chain is Thymidine kinase, found in Bacillus licheniformis (strain ATCC 14580 / DSM 13 / JCM 2505 / CCUG 7422 / NBRC 12200 / NCIMB 9375 / NCTC 10341 / NRRL NRS-1264 / Gibson 46).